A 391-amino-acid chain; its full sequence is Trehalose-phosphate phosphatase (391 aa).

Aspartate 147 serves as the catalytic Nucleophile. Mg(2+) contacts are provided by aspartate 147, aspartate 149, and aspartate 330. Substrate is bound at residue 147–149; that stretch reads DFD.

Belongs to the trehalose phosphatase family. It depends on Mg(2+) as a cofactor.

The catalysed reaction is alpha,alpha-trehalose 6-phosphate + H2O = alpha,alpha-trehalose + phosphate. Its pathway is glycan biosynthesis; trehalose biosynthesis. In terms of biological role, removes the phosphate from trehalose 6-phosphate to produce free trehalose. This chain is Trehalose-phosphate phosphatase (otsB), found in Mycobacterium avium (strain 104).